A 257-amino-acid polypeptide reads, in one-letter code: AN1-type zinc finger protein 2B (257 aa).

2 AN1-type zinc fingers span residues 4 to 52 (PDLG…QKDI) and 94 to 142 (KIFT…HPTS). The Zn(2+) site is built by cysteine 10, cysteine 15, cysteine 25, cysteine 28, cysteine 33, histidine 36, histidine 42, cysteine 44, cysteine 100, cysteine 105, cysteine 115, cysteine 118, cysteine 123, histidine 126, histidine 132, and cysteine 134. A VCP/p97-interacting motif (VIM) region spans residues 141–151 (TSRAGLAAISR). The segment at 153 to 187 (QAVASTSTVPSPSQTMPSCTSPSRATTRSPSWTAP) is disordered. Positions 155-171 (VASTSTVPSPSQTMPSC) are enriched in polar residues. Phosphoserine occurs at positions 163 and 173. Over residues 172 to 186 (TSPSRATTRSPSWTA) the composition is skewed to low complexity. 2 UIM domains span residues 197–216 (SEDEALQRALEMSLAETKPQ) and 221–240 (QEEEDLALAQALSASEAEYQ). Cysteine methyl ester is present on cysteine 254. Cysteine 254 carries the S-geranylgeranyl cysteine lipid modification. Positions 254-257 (CSLC) match the CAAX motif motif. Positions 255-257 (SLC) are cleaved as a propeptide — removed in mature form.

In terms of assembly, binds 'Lys-48'-linked polyubiquitin chains of ubiquitinated proteins. Associates with the proteasome complex; upon exposure to arsenite. Interacts (via VIM motif) with VCP; the interaction is direct. Interacts with BAG6. Interacts with IGF1R (nascent precursor form). Interacts with DERL1, FAF2, NPLOC4 and UFD1; probably through VCP. In terms of processing, phosphorylated by MAPK14. Phosphorylation has no effect on association with the proteasome complex.

The protein localises to the endoplasmic reticulum membrane. Plays a role in protein homeostasis by regulating both the translocation and the ubiquitin-mediated proteasomal degradation of nascent proteins at the endoplasmic reticulum. It is involved in the regulation of signal-mediated translocation of proteins into the endoplasmic reticulum. It also plays a role in the ubiquitin-mediated proteasomal degradation of proteins for which signal-mediated translocation to the endoplasmic reticulum has failed. May therefore function in the endoplasmic reticulum stress-induced pre-emptive quality control, a mechanism that selectively attenuates the translocation of newly synthesized proteins into the endoplasmic reticulum and reroutes them to the cytosol for proteasomal degradation. By controlling the steady-state expression of the IGF1R receptor, indirectly regulates the insulin-like growth factor receptor signaling pathway. The protein is AN1-type zinc finger protein 2B of Homo sapiens (Human).